The chain runs to 509 residues: Dol-P-Glc:Glc(2)Man(9)GlcNAc(2)-PP-Dol alpha-1,2-glucosyltransferase (509 aa).

The Cytoplasmic portion of the chain corresponds to 1–4; it reads MGKL. Residues 5-25 form a helical membrane-spanning segment; the sequence is AVAAITSLWVIPMSIIVNHIV. Residues 26–57 are Lumenal-facing; sequence PEPYMDEIFHVPQAQQYCNGNFRSWDPMITTP. A helical membrane pass occupies residues 58-78; the sequence is PGLYYLSLAHVASLFPGMLLM. The Cytoplasmic portion of the chain corresponds to 79-99; it reads ENTSQSFSEACSTSVLRSTNA. A helical transmembrane segment spans residues 100–120; the sequence is VSAVLCGVLVYEIIRFLGPNL. Over 121–124 the chain is Lumenal; the sequence is SDRK. The chain crosses the membrane as a helical span at residues 125–145; that stretch reads ATFMALVMSLYPLHWFFTFLY. Residues 146 to 170 lie on the Cytoplasmic side of the membrane; it reads YTDVASLTAVLAMYLTCLKRRYVLS. A helical membrane pass occupies residues 171-191; that stretch reads ALFGTLAVFIRQTNVVWMLFV. Residues 192 to 285 are Lumenal-facing; that stretch reads ACSGILDFTL…KWRILIKFSP (94 aa). Residues 210-254 are disordered; it reads QEVNQELHQSSNKKGATLRSNLRKRKSDISSDTSDPFNHGQTVPS. 2 stretches are compositionally biased toward polar residues: residues 215-229 and 239-254; these read ELHQ…TLRS and SSDT…TVPS. A helical transmembrane segment spans residues 286 to 306; that stretch reads FIFVVVAFGIFILWNGGIVLG. The Cytoplasmic segment spans residues 307–311; the sequence is AKEAH. The helical transmembrane segment at 312-332 threads the bilayer; the sequence is VVSLHFAQIMYFSLVSALFTA. Over 333-355 the chain is Lumenal; sequence PLHFSVNQLRHQFHQLHRNWSLS. A glycan (N-linked (GlcNAc...) asparagine) is linked at N351. Residues 356-376 traverse the membrane as a helical segment; the sequence is LILTLVALVAGFVSVHFFSLA. Residues 377-400 lie on the Cytoplasmic side of the membrane; the sequence is HPYLLADNRHYPFYLWRKIINAHW. Residues 401-421 form a helical membrane-spanning segment; that stretch reads LMKYILVPVYVYSWFSILTLL. The Lumenal portion of the chain corresponds to 422-428; that stretch reads AKTRRQT. The chain crosses the membrane as a helical span at residues 429–449; that stretch reads WILVYFLATCGVLVPTPLIEF. Residues 450–472 lie on the Cytoplasmic side of the membrane; the sequence is RYYTIPFYLFMLHSCVRSSSFAT. Residues 473 to 493 traverse the membrane as a helical segment; it reads WLLIGTIFVSINVFTMAMFLF. Residues 494–509 are Lumenal-facing; sequence RPFKWSHEDGVQRFIW.

Belongs to the ALG10 glucosyltransferase family.

It is found in the endoplasmic reticulum membrane. The catalysed reaction is an alpha-D-Glc-(1-&gt;3)-alpha-D-Glc-(1-&gt;3)-alpha-D-Man-(1-&gt;2)-alpha-D-Man-(1-&gt;2)-alpha-D-Man-(1-&gt;3)-[alpha-D-Man-(1-&gt;2)-alpha-D-Man-(1-&gt;3)-[alpha-D-Man-(1-&gt;2)-alpha-D-Man-(1-&gt;6)]-alpha-D-Man-(1-&gt;6)]-beta-D-Man-(1-&gt;4)-beta-D-GlcNAc-(1-&gt;4)-alpha-D-GlcNAc-diphospho-di-trans,poly-cis-dolichol + a di-trans,poly-cis-dolichyl beta-D-glucosyl phosphate = a alpha-D-Glc-(1-&gt;2)-alpha-D-Glc-(1-&gt;3)-alpha-D-Glc-(1-&gt;3)-alpha-D-Man-(1-&gt;2)-alpha-D-Man-(1-&gt;2)-alpha-D-Man-(1-&gt;3)-[alpha-D-Man-(1-&gt;2)-alpha-D-Man-(1-&gt;3)-[alpha-D-Man-(1-&gt;2)-alpha-D-Man-(1-&gt;6)]-alpha-D-Man-(1-&gt;6)]-beta-D-Man-(1-&gt;4)-beta-D-GlcNAc-(1-&gt;4)-alpha-D-GlcNAc-diphospho-di-trans,poly-cis-dolichol + a di-trans,poly-cis-dolichyl phosphate + H(+). The protein operates within protein modification; protein glycosylation. Functionally, dol-P-Glc:Glc(2)Man(9)GlcNAc(2)-PP-Dol alpha-1,2-glucosyltransferase that operates in the biosynthetic pathway of dolichol-linked oligosaccharides, the glycan precursors employed in protein asparagine (N)-glycosylation. The assembly of dolichol-linked oligosaccharides begins on the cytosolic side of the endoplasmic reticulum membrane and finishes in its lumen. The sequential addition of sugars to dolichol pyrophosphate produces dolichol-linked oligosaccharides containing fourteen sugars, including two GlcNAcs, nine mannoses and three glucoses. Once assembled, the oligosaccharide is transferred from the lipid to nascent proteins by oligosaccharyltransferases. In the lumen of the endoplasmic reticulum, adds the third and last glucose residue from dolichyl phosphate glucose (Dol-P-Glc) onto the lipid-linked oligosaccharide intermediate Glc(2)Man(9)GlcNAc(2)-PP-Dol to produce Glc(3)Man(9)GlcNAc(2)-PP-Dol. This Arabidopsis thaliana (Mouse-ear cress) protein is Dol-P-Glc:Glc(2)Man(9)GlcNAc(2)-PP-Dol alpha-1,2-glucosyltransferase.